We begin with the raw amino-acid sequence, 569 residues long: MARPKNVKHIFVTGGVISSLGKGILSASLGMLLKSRGLRVAIQKYDPYINVDPGTMSPYQHGEVYVTDDGAETDLDLGHYERFLDESTSQTSNLTMGRVYKSVIDKERNGDYLGATVQVVPHVIDEIKERMAEQAKNSNLDILITEIGGTIGDIESLPFLEAMRELKLDMGDGNLINIHLTYVPYIKAASELKTKPTQHSVKMLLGVGIQPDILVCRSEKQLSRDIKNKVGHFCNLNDLDVIGLSDCATIYEVPLMLLQEELDSRVLKKLGIKGYQEPALTYWRDFCNKVKFPQEGEITIGICGKYTEYPDAYKSILEAFVHAGASNNVRVNVKLLRAESAEEPTFDFAKELAGIHAILVAPGFGDRGIEGKIRYIQYAREQNIPFFGICLGMQCATIEFARNVCDLQDANSTEFNKRARFAIIDLMEHQKKVKEKGGTMRLGSYPCIITDGSKAHMAYQKFLVNERHRHRYEFNNSFRTLFEERGMLFSGTSPNGELIEIVEIKNHRWFVGVQFHPELKSRVQKVHPLFHSFVAAAKDYARGVQQMDMAIEMPSFMPILNEEGESKSE.

The segment at 1 to 272 is amidoligase domain; sequence MARPKNVKHI…DSRVLKKLGI (272 aa). Ser-18 provides a ligand contact to CTP. Ser-18 is a binding site for UTP. 19–24 lines the ATP pocket; it reads SLGKGI. L-glutamine is bound at residue Tyr-59. Asp-76 lines the ATP pocket. 2 residues coordinate Mg(2+): Asp-76 and Glu-146. CTP-binding positions include 153-155, 193-198, and Lys-229; these read DIE and KTKPTQ. UTP contacts are provided by residues 193–198 and Lys-229; that span reads KTKPTQ. In terms of domain architecture, Glutamine amidotransferase type-1 spans 299–543; that stretch reads TIGICGKYTE…VAAAKDYARG (245 aa). Residue Gly-363 participates in L-glutamine binding. Cys-390 functions as the Nucleophile; for glutamine hydrolysis in the catalytic mechanism. L-glutamine-binding positions include 391 to 394, Glu-414, and Arg-471; that span reads LGMQ. Active-site residues include His-516 and Glu-518.

Belongs to the CTP synthase family. Homotetramer.

It catalyses the reaction UTP + L-glutamine + ATP + H2O = CTP + L-glutamate + ADP + phosphate + 2 H(+). It carries out the reaction L-glutamine + H2O = L-glutamate + NH4(+). The catalysed reaction is UTP + NH4(+) + ATP = CTP + ADP + phosphate + 2 H(+). Its pathway is pyrimidine metabolism; CTP biosynthesis via de novo pathway; CTP from UDP: step 2/2. Its activity is regulated as follows. Allosterically activated by GTP, when glutamine is the substrate; GTP has no effect on the reaction when ammonia is the substrate. The allosteric effector GTP functions by stabilizing the protein conformation that binds the tetrahedral intermediate(s) formed during glutamine hydrolysis. Inhibited by the product CTP, via allosteric rather than competitive inhibition. Its function is as follows. Catalyzes the ATP-dependent amination of UTP to CTP with either L-glutamine or ammonia as the source of nitrogen. Regulates intracellular CTP levels through interactions with the four ribonucleotide triphosphates. This Chlorobium chlorochromatii (strain CaD3) protein is CTP synthase.